The chain runs to 484 residues: Glutamate mutase epsilon subunit (484 aa).

Arginine 66 contributes to the L-glutamate binding site. Glycine 68 contributes to the adenosylcob(III)alamin binding site. Arginine 100 is a binding site for L-glutamate. Residue asparagine 123 participates in adenosylcob(III)alamin binding. Residues 149-150 (RH), glutamate 171, and tyrosine 177 contribute to the L-glutamate site. Proline 180 contributes to the adenosylcob(III)alamin binding site. Residue tyrosine 181 participates in L-glutamate binding. Residues phenylalanine 297, lysine 326, glutamate 330, and isoleucine 334 each contribute to the adenosylcob(III)alamin site.

The protein belongs to the methylaspartate mutase GlmE subunit family. As to quaternary structure, heterotetramer composed of 2 epsilon subunits (GlmE) and 2 sigma subunits (GlmS). GlmE exists as a homodimer and GlmS as a monomer. The cofactor is adenosylcob(III)alamin.

It carries out the reaction (2S,3S)-3-methyl-L-aspartate = L-glutamate. It participates in amino-acid degradation; L-glutamate degradation via mesaconate pathway; acetate and pyruvate from L-glutamate: step 1/4. In terms of biological role, catalyzes the carbon skeleton rearrangement of L-glutamate to L-threo-3-methylaspartate ((2S,3S)-3-methylaspartate). The polypeptide is Glutamate mutase epsilon subunit (Desulfitobacterium hafniense (strain Y51)).